The primary structure comprises 407 residues: Tyrosine--tRNA ligase 1 (407 aa).

Tyr35 contacts L-tyrosine. Positions 40–49 (PTGDSLHVGH) match the 'HIGH' region motif. Residues Tyr168 and Gln172 each coordinate L-tyrosine. The short motif at 228–232 (KMGKT) is the 'KMSKS' region element. Lys231 contacts ATP. The S4 RNA-binding domain occupies 340–406 (SSILDVLVHT…GKKKYYKIVI (67 aa)).

It belongs to the class-I aminoacyl-tRNA synthetase family. TyrS type 1 subfamily. As to quaternary structure, homodimer.

It is found in the cytoplasm. The catalysed reaction is tRNA(Tyr) + L-tyrosine + ATP = L-tyrosyl-tRNA(Tyr) + AMP + diphosphate + H(+). In terms of biological role, catalyzes the attachment of tyrosine to tRNA(Tyr) in a two-step reaction: tyrosine is first activated by ATP to form Tyr-AMP and then transferred to the acceptor end of tRNA(Tyr). This chain is Tyrosine--tRNA ligase 1, found in Clostridium acetobutylicum (strain ATCC 824 / DSM 792 / JCM 1419 / IAM 19013 / LMG 5710 / NBRC 13948 / NRRL B-527 / VKM B-1787 / 2291 / W).